The following is a 270-amino-acid chain: Phosphatidylinositol transfer protein alpha isoform (270 aa).

Thr-58, Lys-60, Glu-85, Asn-89, Thr-96, and Lys-194 together coordinate a 1,2-diacyl-sn-glycero-3-phospho-(1D-myo-inositol). The residue at position 215 (Lys-215) is an N6-acetyllysine. Residues 250–263 are compositionally biased toward basic and acidic residues; sequence TKRQLDEMRQKDPV. A disordered region spans residues 250–270; sequence TKRQLDEMRQKDPVKGMTADD.

Belongs to the PtdIns transfer protein family. PI transfer class I subfamily.

Its subcellular location is the cytoplasm. The protein localises to the nucleus. It catalyses the reaction a 1,2-diacyl-sn-glycero-3-phosphocholine(in) = a 1,2-diacyl-sn-glycero-3-phosphocholine(out). The enzyme catalyses a 1,2-diacyl-sn-glycero-3-phospho-(1D-myo-inositol)(in) = a 1,2-diacyl-sn-glycero-3-phospho-(1D-myo-inositol)(out). Phosphatidylinositol transfer activity is inhibited by N-ethylmaleimide. Its function is as follows. Catalyzes the transfer of phosphatidylinositol (PI) and phosphatidylcholine (PC) between membranes. Shows a preference for PI and PC containing shorter saturated or monosaturated acyl chains at the sn-1 and sn-2 positions. Preference order for PC is C16:1 &gt; C16:0 &gt; C18:1 &gt; C18:0 &gt; C20:4 and for PI is C16:1 &gt; C16:0 &gt; C18:1 &gt; C18:0 &gt; C20:4 &gt; C20:3. This Homo sapiens (Human) protein is Phosphatidylinositol transfer protein alpha isoform (PITPNA).